We begin with the raw amino-acid sequence, 314 residues long: Putative steroid dehydrogenase 1 (314 aa).

47–76 (ASWAVVTGATDGIGKSYSFELAKRGFNVYI) contributes to the NADP(+) binding site. Tyr202 is an active-site residue.

The protein belongs to the short-chain dehydrogenases/reductases (SDR) family. 17-beta-HSD 3 subfamily.

The sequence is that of Putative steroid dehydrogenase 1 (stdh-1) from Caenorhabditis elegans.